Consider the following 1790-residue polypeptide: Atrochrysone carboxylic acid synthase (1790 aa).

An N-terminal acylcarrier protein transacylase domain (SAT) region spans residues 27 to 265 (RDLQDLFRQA…ALPVYGGLCH (239 aa)). Residues 399–833 (QSKLAIVGMS…GGNTTMILED (435 aa)) form the Ketosynthase family 3 (KS3) domain. Active-site for beta-ketoacyl synthase activity residues include C572, H708, and H751. A malonyl-CoA:ACP transacylase (MAT) domain region spans residues 934 to 1254 (FSFTGQGASH…IAQLYTVGVD (321 aa)). Positions 1323–1475 (QQIVEQVFDT…SLTHLVRDRI (153 aa)) are N-terminal hotdog fold. The PKS/mFAS DH domain maps to 1323–1634 (QQIVEQVFDT…FHRYRRILLE (312 aa)). H1357 (proton acceptor; for dehydratase activity) is an active-site residue. The tract at residues 1357 to 1631 (HRMNDCGVAT…GIEFHRYRRI (275 aa)) is product template (PT) domain. Residues 1487-1634 (ANRLSHNMAY…FHRYRRILLE (148 aa)) are C-terminal hotdog fold. The active-site Proton donor; for dehydratase activity is the D1545. The tract at residues 1644–1667 (NLDDTTETKDISSSTQHSVPVSRQ) is disordered. Residues 1654 to 1664 (ISSSTQHSVPV) show a composition bias toward polar residues. The region spanning 1715 to 1789 (SSITNRAMQL…DLRNWLEETY (75 aa)) is the Carrier domain. S1749 carries the post-translational modification O-(pantetheine 4'-phosphoryl)serine.

The enzyme catalyses holo-[ACP] + 8 malonyl-CoA + 8 H(+) = atrochrysone carboxyl-[ACP] + 8 CO2 + 8 CoA + 2 H2O. The protein operates within pigment biosynthesis. Its function is as follows. Non-reducing polyketide synthase; part of the gene cluster that mediates the biosynthesis of the bianthraquinone cladofulvin, a conidial pigment not required for virulence but that plays a role in fitness and resistance to environmental stresses including UV light and low-temperature stress. The pathway begins with the synthesis of atrochrysone thioester by the polyketide synthase (PKS) claG. The atrochrysone carboxyl ACP thioesterase claF then breaks the thioester bond and releases the atrochrysone carboxylic acid from claG. This compound is decarboxylated by claH to yield emodin, which is further converted to chrysophanol hydroquinone by the reductase claC and the dehydratase claB. The cytochrome P450 monooxygenase claM then catalyzes the dimerization of nataloe-emodin to cladofulvin. The chain is Atrochrysone carboxylic acid synthase from Passalora fulva (Tomato leaf mold).